The chain runs to 45 residues: Putative metallothionein-like protein 1B (45 aa).

The protein belongs to the metallothionein superfamily. Type 15 family.

Functionally, metallothioneins have a high content of cysteine residues that bind various heavy metals. Confers tolerance to cadmium (Cd) and plays a role in Cd and zinc (Zn) homeostasis. The polypeptide is Putative metallothionein-like protein 1B (MT1B) (Arabidopsis thaliana (Mouse-ear cress)).